The following is a 375-amino-acid chain: 23S rRNA (uracil(747)-C(5))-methyltransferase RlmC (375 aa).

Residues Cys-3, Cys-11, Cys-14, and Cys-87 each contribute to the [4Fe-4S] cluster site. Residues Gln-212, Phe-241, Glu-262, and Asn-307 each coordinate S-adenosyl-L-methionine. Residue Cys-334 is the Nucleophile of the active site.

This sequence belongs to the class I-like SAM-binding methyltransferase superfamily. RNA M5U methyltransferase family. RlmC subfamily.

It catalyses the reaction uridine(747) in 23S rRNA + S-adenosyl-L-methionine = 5-methyluridine(747) in 23S rRNA + S-adenosyl-L-homocysteine + H(+). In terms of biological role, catalyzes the formation of 5-methyl-uridine at position 747 (m5U747) in 23S rRNA. The sequence is that of 23S rRNA (uracil(747)-C(5))-methyltransferase RlmC from Shigella boydii serotype 4 (strain Sb227).